Consider the following 355-residue polypeptide: 3-dehydroquinate synthase (355 aa).

Residues Gly-105–Asp-109, Thr-129–Ser-130, Lys-142, Lys-151, and Thr-169–Thr-172 each bind NAD(+). Zn(2+) is bound by residues Glu-184, His-246, and His-263.

This sequence belongs to the sugar phosphate cyclases superfamily. Dehydroquinate synthase family. It depends on NAD(+) as a cofactor. Co(2+) is required as a cofactor. The cofactor is Zn(2+).

It is found in the cytoplasm. It carries out the reaction 7-phospho-2-dehydro-3-deoxy-D-arabino-heptonate = 3-dehydroquinate + phosphate. The protein operates within metabolic intermediate biosynthesis; chorismate biosynthesis; chorismate from D-erythrose 4-phosphate and phosphoenolpyruvate: step 2/7. Functionally, catalyzes the conversion of 3-deoxy-D-arabino-heptulosonate 7-phosphate (DAHP) to dehydroquinate (DHQ). The protein is 3-dehydroquinate synthase of Streptococcus agalactiae serotype III (strain NEM316).